Consider the following 76-residue polypeptide: Rhesus theta defensin-1/3 subunit A (76 aa).

The first 22 residues, 1 to 22 (MRTFALLTAMLLLVALHAQAEA), serve as a signal peptide directing secretion. Residues 23–64 (RQARADEAAAQQQPGTDDQGMAHSFTWPENAALPLSESAKGL) constitute a propeptide that is removed on maturation. The disordered stretch occupies residues 25 to 45 (ARADEAAAQQQPGTDDQGMAH). R65 participates in a covalent cross-link: Cyclopeptide (Arg-Cys) (interchain with C-73 in subunit A); in form RTD-3. A Cyclopeptide (Arg-Cys) (interchain with C-73 in subunit B); in form RTD-1 cross-link involves residue R65. Residues C68 and C73 are joined by a disulfide bond. C73 participates in a covalent cross-link: Cyclopeptide (Cys-Arg) (interchain with R-65 in subunit A); in form RTD-3. Residue C73 forms a Cyclopeptide (Cys-Arg) (interchain with R-65 in subunit B); in form RTD-1 linkage. The propeptide occupies 74–76 (RLL).

This sequence belongs to the alpha-defensin family. Theta subfamily. In terms of assembly, RTD-1 is a cyclic heterodimer composed of subunits A and B; disulfide-linked. RTD-3 is a cyclic homodimer composed of two subunits A; disulfide-linked. Post-translationally, forms a cyclic peptide with subunit A (RTD-3) or with subunit B (RTD-1). An additional intersubunit disulfide bond is formed. In terms of tissue distribution, RTD-1 is expressed in bone marrow. Detected in promyelocytes, myelocytes and mature neutrophils and monocytes.

Functionally, RTD-1 and RTD-3 have similar antimicrobial activities against the Gram-positive bacteria S.aureus 502A and L.monocytogenes, the Gram-negative bacteria S.typhimurium and E.coli ML35, and the fungi C.albicans 16820 and C.neoformans 271A. In Macaca mulatta (Rhesus macaque), this protein is Rhesus theta defensin-1/3 subunit A (RTD1A).